The primary structure comprises 189 residues: GTPase NRas (189 aa).

GTP-binding positions include 10–18 (GAGGVGKSA) and 29–30 (VD). The short motif at 32 to 40 (YDPTIEDSY) is the Effector region element. 57–61 (DTAGQ) provides a ligand contact to GTP. Ser89 is modified (phosphoserine). Residue 116–119 (NKCD) coordinates GTP. The segment at 166 to 185 (YRMKKLNSSDDGTQGCLGLS) is hypervariable region. Lys170 is covalently cross-linked (Glycyl lysine isopeptide (Lys-Gly) (interchain with G-Cter in ubiquitin)). Cys181 carries the S-palmitoyl cysteine lipid modification. A lipid anchor (S-farnesyl cysteine) is attached at Cys186. Residues 187–189 (AVM) constitute a propeptide, removed in mature form.

Belongs to the small GTPase superfamily. Ras family. In terms of assembly, interacts (active GTP-bound form preferentially) with RGS14. Interacts (active GTP-bound form) with RASSF7. Interacts (active GTP-bound form) with both SHOC2 and PP1c (all isoforms) to form a tertiary complex; SHOC2 and PP1c preferably bind M-Ras/MRAS, but they also bind K-Ras/KRAS, N-Ras/NRAS and H-Ras/HRAS. Palmitoylated by the ZDHHC9-GOLGA7 complex. Depalmitoylated by ABHD17A, ABHD17B and ABHD17C. A continuous cycle of de- and re-palmitoylation regulates rapid exchange between plasma membrane and Golgi. Post-translationally, acetylation at Lys-104 prevents interaction with guanine nucleotide exchange factors (GEFs). In terms of processing, ubiquitinated by the BCR(LZTR1) E3 ubiquitin ligase complex at Lys-170 in a non-degradative manner, leading to inhibit Ras signaling by decreasing Ras association with membranes. Phosphorylation at Ser-89 enhances NRAS association with its downstream effectors.

It is found in the cell membrane. Its subcellular location is the golgi apparatus membrane. The enzyme catalyses GTP + H2O = GDP + phosphate + H(+). Alternates between an inactive form bound to GDP and an active form bound to GTP. Activated by a guanine nucleotide-exchange factor (GEF) and inactivated by a GTPase-activating protein (GAP). Its function is as follows. Ras proteins bind GDP/GTP and possess intrinsic GTPase activity. This chain is GTPase NRas (NRAS), found in Monodelphis domestica (Gray short-tailed opossum).